A 230-amino-acid polypeptide reads, in one-letter code: N-(5'-phosphoribosyl)anthranilate isomerase (230 aa).

The protein belongs to the TrpF family.

The catalysed reaction is N-(5-phospho-beta-D-ribosyl)anthranilate = 1-(2-carboxyphenylamino)-1-deoxy-D-ribulose 5-phosphate. It participates in amino-acid biosynthesis; L-tryptophan biosynthesis; L-tryptophan from chorismate: step 3/5. The polypeptide is N-(5'-phosphoribosyl)anthranilate isomerase (Syntrophus aciditrophicus (strain SB)).